A 508-amino-acid polypeptide reads, in one-letter code: Photosystem II CP47 reaction center protein (508 aa).

6 helical membrane passes run 21 to 36 (SVHIMHTALVAGWAGS), 101 to 115 (IVFSGLCFLAAIWHW), 140 to 156 (GIHLFLSGVACFGFGAF), 203 to 218 (IAAGTLGILAGLFHLS), 237 to 252 (VLSSSIAAVFFAAFVV), and 457 to 472 (SFALLFFFGHIWHGAR).

The protein belongs to the PsbB/PsbC family. PsbB subfamily. In terms of assembly, PSII is composed of 1 copy each of membrane proteins PsbA, PsbB, PsbC, PsbD, PsbE, PsbF, PsbH, PsbI, PsbJ, PsbK, PsbL, PsbM, PsbT, PsbX, PsbY, PsbZ, Psb30/Ycf12, at least 3 peripheral proteins of the oxygen-evolving complex and a large number of cofactors. It forms dimeric complexes. The cofactor is Binds multiple chlorophylls. PSII binds additional chlorophylls, carotenoids and specific lipids..

The protein resides in the plastid. Its subcellular location is the chloroplast thylakoid membrane. Functionally, one of the components of the core complex of photosystem II (PSII). It binds chlorophyll and helps catalyze the primary light-induced photochemical processes of PSII. PSII is a light-driven water:plastoquinone oxidoreductase, using light energy to abstract electrons from H(2)O, generating O(2) and a proton gradient subsequently used for ATP formation. This chain is Photosystem II CP47 reaction center protein, found in Aethionema cordifolium (Lebanon stonecress).